The primary structure comprises 177 residues: Antigen TpF1 (177 aa).

This sequence belongs to the Dps family. In terms of assembly, homodecamer; either linked or stabilized by disulfide bonds.

In terms of biological role, may play an important structural role in the outer membrane. The polypeptide is Antigen TpF1 (tpf1) (Treponema pallidum (strain Nichols)).